The sequence spans 466 residues: Asparagine--tRNA ligase (466 aa).

Belongs to the class-II aminoacyl-tRNA synthetase family. As to quaternary structure, homodimer.

It is found in the cytoplasm. It catalyses the reaction tRNA(Asn) + L-asparagine + ATP = L-asparaginyl-tRNA(Asn) + AMP + diphosphate + H(+). In Shewanella frigidimarina (strain NCIMB 400), this protein is Asparagine--tRNA ligase.